A 149-amino-acid chain; its full sequence is Transcriptional repressor NrdR (149 aa).

Residues 3–34 (CPFCSAVDTKVIDSRLVAEGHQVRRRRECLLC) fold into a zinc finger. An ATP-cone domain is found at 49–139 (PRVIKSNGSR…VYRSFEDIRE (91 aa)).

Belongs to the NrdR family. Zn(2+) serves as cofactor.

Its function is as follows. Negatively regulates transcription of bacterial ribonucleotide reductase nrd genes and operons by binding to NrdR-boxes. The chain is Transcriptional repressor NrdR from Aeromonas hydrophila subsp. hydrophila (strain ATCC 7966 / DSM 30187 / BCRC 13018 / CCUG 14551 / JCM 1027 / KCTC 2358 / NCIMB 9240 / NCTC 8049).